The following is a 278-amino-acid chain: Ras-related protein Rab-40A-like (278 aa).

Gly26, Lys27, and Ser28 together coordinate GTP. Ser28 is a binding site for Mg(2+). Positions 41 to 49 (SPYSHLGGI) are switch-I. Residue Asp69 participates in Mg(2+) binding. Gly72, Asn126, and Arg127 together coordinate GTP. Positions 72–88 (GQGRFCTIFRSYSRGAQ) are switch-II. The SOCS box domain occupies 175–228 (LLRHRLNWLGRPSKVLSLQDLCCRTIVSCTPVHLVDKLPLPIALRSHLKSFSMA). Residue Cys270 is the site of S-palmitoyl cysteine attachment. A lipid anchor (S-geranylgeranyl cysteine) is attached at Cys275.

It belongs to the small GTPase superfamily. Rab family. It depends on Mg(2+) as a cofactor. Expressed in brain, lung, heart, skeletal muscle, kidney and liver. Highest expression in brain. Expressed in fetal brain and kidney.

Its subcellular location is the membrane. The protein resides in the cytoplasm. It localises to the mitochondrion. The catalysed reaction is GTP + H2O = GDP + phosphate + H(+). Its pathway is protein modification; protein ubiquitination. Regulated by guanine nucleotide exchange factors (GEFs) which promote the exchange of bound GDP for free GTP. Regulated by GTPase activating proteins (GAPs) which increase the GTP hydrolysis activity. Inhibited by GDP dissociation inhibitors (GDIs). May act as substrate-recognition component of the ECS(RAB40) E3 ubiquitin ligase complex which mediates the ubiquitination and subsequent proteasomal degradation of target proteins. The Rab40 subfamily belongs to the Rab family that are key regulators of intracellular membrane trafficking, from the formation of transport vesicles to their fusion with membranes. Rabs cycle between an inactive GDP-bound form and an active GTP-bound form that is able to recruit to membranes different sets of downstream effectors directly responsible for vesicle formation, movement, tethering and fusion. The sequence is that of Ras-related protein Rab-40A-like from Homo sapiens (Human).